Reading from the N-terminus, the 368-residue chain is Agmatine deiminase (368 aa).

C357 (amidino-cysteine intermediate) is an active-site residue.

The protein belongs to the agmatine deiminase family. As to quaternary structure, homodimer.

The catalysed reaction is agmatine + H2O = N-carbamoylputrescine + NH4(+). The protein operates within amine and polyamine biosynthesis; putrescine biosynthesis via agmatine pathway; N-carbamoylputrescine from agmatine: step 1/1. Functionally, mediates the hydrolysis of agmatine into N-carbamoylputrescine in the arginine decarboxylase (ADC) pathway of putrescine biosynthesis, a basic polyamine. This is Agmatine deiminase from Pseudomonas aeruginosa (strain LESB58).